A 308-amino-acid polypeptide reads, in one-letter code: Probable D,D-dipeptide transport ATP-binding protein DdpF (308 aa).

One can recognise an ABC transporter domain in the interval 8–243 (LRDVHINFPA…PAHPYTRLLL (236 aa)). An ATP-binding site is contributed by 49–56 (GESGCGKS).

The protein belongs to the ABC transporter superfamily. The complex is composed of two ATP-binding proteins (DdpD and DdpF), two transmembrane proteins (DdpB and DdpC) and a solute-binding protein (DdpA).

Its subcellular location is the cell inner membrane. In terms of biological role, part of the ABC transporter complex DdpABCDF, which is probably involved in D,D-dipeptide transport. Probably responsible for energy coupling to the transport system. This is Probable D,D-dipeptide transport ATP-binding protein DdpF from Escherichia coli (strain K12).